Consider the following 405-residue polypeptide: Imidazolonepropionase (405 aa).

Fe(3+) is bound by residues H73 and H75. Zn(2+) contacts are provided by H73 and H75. Positions 82, 145, and 178 each coordinate 4-imidazolone-5-propanoate. Y145 contacts N-formimidoyl-L-glutamate. H243 provides a ligand contact to Fe(3+). H243 contacts Zn(2+). 4-imidazolone-5-propanoate is bound at residue Q246. D318 is a binding site for Fe(3+). Residue D318 coordinates Zn(2+). The N-formimidoyl-L-glutamate site is built by N320 and G322. 4-imidazolone-5-propanoate is bound at residue T323.

Belongs to the metallo-dependent hydrolases superfamily. HutI family. Zn(2+) is required as a cofactor. It depends on Fe(3+) as a cofactor.

It is found in the cytoplasm. It catalyses the reaction 4-imidazolone-5-propanoate + H2O = N-formimidoyl-L-glutamate. It functions in the pathway amino-acid degradation; L-histidine degradation into L-glutamate; N-formimidoyl-L-glutamate from L-histidine: step 3/3. In terms of biological role, catalyzes the hydrolytic cleavage of the carbon-nitrogen bond in imidazolone-5-propanoate to yield N-formimidoyl-L-glutamate. It is the third step in the universal histidine degradation pathway. The polypeptide is Imidazolonepropionase (Brucella suis (strain ATCC 23445 / NCTC 10510)).